We begin with the raw amino-acid sequence, 415 residues long: Esterase FrsA (415 aa).

The disordered stretch occupies residues 1-23 (MANRNLSESLFKPRQKHQETSTL).

This sequence belongs to the FrsA family.

It carries out the reaction a carboxylic ester + H2O = an alcohol + a carboxylate + H(+). Functionally, catalyzes the hydrolysis of esters. The protein is Esterase FrsA of Photorhabdus laumondii subsp. laumondii (strain DSM 15139 / CIP 105565 / TT01) (Photorhabdus luminescens subsp. laumondii).